The sequence spans 354 residues: Release factor glutamine methyltransferase (354 aa).

S-adenosyl-L-methionine is bound by residues 174–178 (GSGSG), aspartate 197, and asparagine 241. 241–244 (NPPY) is a substrate binding site.

It belongs to the protein N5-glutamine methyltransferase family. PrmC subfamily.

It catalyses the reaction L-glutaminyl-[peptide chain release factor] + S-adenosyl-L-methionine = N(5)-methyl-L-glutaminyl-[peptide chain release factor] + S-adenosyl-L-homocysteine + H(+). Its function is as follows. Methylates the class 1 translation termination release factors RF1/PrfA and RF2/PrfB on the glutamine residue of the universally conserved GGQ motif. This chain is Release factor glutamine methyltransferase, found in Fusobacterium nucleatum subsp. nucleatum (strain ATCC 25586 / DSM 15643 / BCRC 10681 / CIP 101130 / JCM 8532 / KCTC 2640 / LMG 13131 / VPI 4355).